Here is a 314-residue protein sequence, read N- to C-terminus: Putative glycosyltransferase ORF31 (314 aa).

It belongs to the glycosyltransferase group 1 family.

In Haloarcula hispanica (His1V), this protein is Putative glycosyltransferase ORF31.